The primary structure comprises 120 residues: Large ribosomal subunit protein P3 (120 aa).

The interval 83–120 is disordered; that stretch reads GGGGAAASGGAAAEAPKEEKKEEEKEESDDDMGFSLFD.

Belongs to the eukaryotic ribosomal protein P1/P2 family. In terms of processing, phosphorylated.

In terms of biological role, plays an important role in the elongation step of protein synthesis. This chain is Large ribosomal subunit protein P3 (RPP3A), found in Zea mays (Maize).